A 404-amino-acid polypeptide reads, in one-letter code: Cysteine desulfurase IscS (404 aa).

Pyridoxal 5'-phosphate contacts are provided by residues 75-76, Asn155, Gln183, and 203-205; these read AT and SAH. At Lys206 the chain carries N6-(pyridoxal phosphate)lysine. Residue Thr243 coordinates pyridoxal 5'-phosphate. The active-site Cysteine persulfide intermediate is the Cys328. Residue Cys328 coordinates [2Fe-2S] cluster.

The protein belongs to the class-V pyridoxal-phosphate-dependent aminotransferase family. NifS/IscS subfamily. In terms of assembly, homodimer. Forms a heterotetramer with IscU, interacts with other sulfur acceptors. It depends on pyridoxal 5'-phosphate as a cofactor.

Its subcellular location is the cytoplasm. The enzyme catalyses (sulfur carrier)-H + L-cysteine = (sulfur carrier)-SH + L-alanine. It functions in the pathway cofactor biosynthesis; iron-sulfur cluster biosynthesis. Master enzyme that delivers sulfur to a number of partners involved in Fe-S cluster assembly, tRNA modification or cofactor biosynthesis. Catalyzes the removal of elemental sulfur atoms from cysteine to produce alanine. Functions as a sulfur delivery protein for Fe-S cluster synthesis onto IscU, an Fe-S scaffold assembly protein, as well as other S acceptor proteins. This is Cysteine desulfurase IscS from Photorhabdus laumondii subsp. laumondii (strain DSM 15139 / CIP 105565 / TT01) (Photorhabdus luminescens subsp. laumondii).